A 400-amino-acid polypeptide reads, in one-letter code: Clotting factor B (400 aa).

An N-terminal signal peptide occupies residues Met1–Arg23. The region spanning Glu36 to Cys80 is the Clip domain. Intrachain disulfides connect Cys37–Cys79, Cys47–Cys68, and Cys53–Cys80. The propeptide at Leu104 to Val124 is activation peptide. Asn140 carries an N-linked (GlcNAc...) asparagine glycan. In terms of domain architecture, Peptidase S1 spans Ile148–Asn392. Active-site charge relay system residues include His192 and Asp240. A glycan (N-linked (GlcNAc...) asparagine) is linked at Asn251. Cystine bridges form between Cys307-Cys329 and Cys340-Cys368. The Charge relay system role is filled by Ser344. An N-linked (GlcNAc...) asparagine glycan is attached at Asn352.

The protein belongs to the peptidase S1 family. CLIP subfamily. As to quaternary structure, upon activation by factor C, it is converted to a two-chain active form composed of a light and a heavy chain linked by a disulfide bond.

The protein localises to the secreted. It carries out the reaction Selective cleavage of 98-Arg-|-Ile-99 bond in Limulus proclotting enzyme to form active clotting enzyme.. Its activity is regulated as follows. Strongly inhibited by alpha2-plasmin inhibitor and DFP. Partially inhibited by benzamidine, leupeptin and PCMB. Functionally, this enzyme is closely associated with an endotoxin-sensitive hemolymph coagulation system which may play important roles in both hemostasis and host defense mechanisms. Its active form catalyzes the activation of proclotting enzyme. Does not activate the mammalian coagulation factors factor IX, factor X, prothrombin, plasminogen, protein C or prekallikrein. Does not hydrolyze fibrinogen. Does not catalyze the activation of factor C or coagulogen. This is Clotting factor B from Tachypleus tridentatus (Japanese horseshoe crab).